The following is a 295-amino-acid chain: Hydroxylase/desaturase efuI (295 aa).

It belongs to the asaB hydroxylase/desaturase family.

It functions in the pathway secondary metabolite biosynthesis; terpenoid biosynthesis. In terms of biological role, hydroxylase/desaturase; part of the gene cluster that mediates the biosynthesis of enfumafungin, a glycosylated fernene-type triterpenoid with potent antifungal activity, mediated by its interaction with beta-1,3-glucan synthase and the fungal cell wall. The pathway begins with the terpene cyclase-glycosyl transferase fusion protein that most likely uses 2,3-oxidosqualene as substrate and catalyzes glycosylation immediately after cyclization. The fernene glycoside then could be processed by the desaturase efuI which catalyzes isomerization of a double bond established by efuA to form the core structure. The latter would then undergo a series of hydroxylations in unknown order at C-2, C-19, C-23 and C-25, which would be catalyzed by two of the three cytochrome P450 monooxygenases efuB, efuG or efuH. The hydroxy-group at C-25 becomes oxidized by the dehydrogenase efuE to enable a spontaneous, non-enzymatic hemiacetal formation with C-23. After hydroxylation at C-2, acetylation by the acetyltransferase efuC takes place. The final steps in enfumafungin biosynthesis require expansion of the 5-membered ring by lactonization via a Baeyer-Villiger reaction mediated by one of the BGC's cytochrome P450 monooxygenases (efuB, efuG or efuH) followed by ring cleavage. This type of reaction would establish a double bond between C-20 and C-21 which could be reduced by the reductase efuL to form the final product. This Hormonema carpetanum protein is Hydroxylase/desaturase efuI.